A 148-amino-acid polypeptide reads, in one-letter code: Large ribosomal subunit protein bL9 (148 aa).

The protein belongs to the bacterial ribosomal protein bL9 family.

Binds to the 23S rRNA. The polypeptide is Large ribosomal subunit protein bL9 (Campylobacter concisus (strain 13826)).